Here is a 472-residue protein sequence, read N- to C-terminus: GTPase Der (472 aa).

EngA-type G domains lie at Pro3–Glu166 and Ile176–Met349. Residues Gly9–Ser16, Asp56–Ile60, Asn118–Asp121, Gly182–Ser189, Asp229–Val233, and Asn294–Asp297 contribute to the GTP site. A KH-like domain is found at Ala350–Glu434. Residues Gly433 to Arg472 are disordered. The span at Lys440–Arg472 shows a compositional bias: basic residues.

Belongs to the TRAFAC class TrmE-Era-EngA-EngB-Septin-like GTPase superfamily. EngA (Der) GTPase family. Associates with the 50S ribosomal subunit.

Its function is as follows. GTPase that plays an essential role in the late steps of ribosome biogenesis. This is GTPase Der from Hahella chejuensis (strain KCTC 2396).